The chain runs to 223 residues: MPGRQRRDGGSGPAGQNGPNSGDNSNARGDNRGGGRDRRDGGRGGNAAEKSQFIERVVTINRVSKVVKGGRRFSFTALVIVGDGNGLVGVGYGKAKEVPAAIQKGVEEARKSFFRVPMIANTITHPVQGEAAAGIVMLRPASPGTGVIAGGAVRAVLECAGIADILSKSLGSDNAINVVHATVAALKGLQRPEEVAARRGLTLEEVAPAGMLRARAQAAGSVK.

Positions 1-48 (MPGRQRRDGGSGPAGQNGPNSGDNSNARGDNRGGGRDRRDGGRGGNAA) are disordered. Over residues 29–42 (GDNRGGGRDRRDGG) the composition is skewed to basic and acidic residues. The 64-residue stretch at 53-116 (FIERVVTINR…EEARKSFFRV (64 aa)) folds into the S5 DRBM domain.

This sequence belongs to the universal ribosomal protein uS5 family. As to quaternary structure, part of the 30S ribosomal subunit. Contacts proteins S4 and S8.

In terms of biological role, with S4 and S12 plays an important role in translational accuracy. Functionally, located at the back of the 30S subunit body where it stabilizes the conformation of the head with respect to the body. The chain is Small ribosomal subunit protein uS5 from Rhodococcus erythropolis (strain PR4 / NBRC 100887).